Here is a 127-residue protein sequence, read N- to C-terminus: Small ribosomal subunit protein uS13 (127 aa).

Residues 99–127 (RGQRTRTNARTRRGRRGQAIGIKKKTLKK) are disordered.

The protein belongs to the universal ribosomal protein uS13 family. Part of the 30S ribosomal subunit. Forms a loose heterodimer with protein S19. Forms two bridges to the 50S subunit in the 70S ribosome.

Functionally, located at the top of the head of the 30S subunit, it contacts several helices of the 16S rRNA. In the 70S ribosome it contacts the 23S rRNA (bridge B1a) and protein L5 of the 50S subunit (bridge B1b), connecting the 2 subunits; these bridges are implicated in subunit movement. Contacts the tRNAs in the A and P-sites. This chain is Small ribosomal subunit protein uS13, found in Roseiflexus castenholzii (strain DSM 13941 / HLO8).